We begin with the raw amino-acid sequence, 394 residues long: S-adenosylmethionine synthase (394 aa).

Position 16 (His-16) interacts with ATP. Residue Asp-18 participates in Mg(2+) binding. Glu-44 serves as a coordination point for K(+). Positions 57 and 99 each coordinate L-methionine. Residues 99–109 (QSPDIAQGVDE) form a flexible loop region. Residues 173 to 175 (DAK), 240 to 241 (RF), Asp-249, 255 to 256 (RK), Ala-272, and Lys-276 each bind ATP. Asp-249 is a binding site for L-methionine. Lys-280 contributes to the L-methionine binding site.

Belongs to the AdoMet synthase family. In terms of assembly, homotetramer; dimer of dimers. The cofactor is Mg(2+). K(+) serves as cofactor.

Its subcellular location is the cytoplasm. The enzyme catalyses L-methionine + ATP + H2O = S-adenosyl-L-methionine + phosphate + diphosphate. The protein operates within amino-acid biosynthesis; S-adenosyl-L-methionine biosynthesis; S-adenosyl-L-methionine from L-methionine: step 1/1. Functionally, catalyzes the formation of S-adenosylmethionine (AdoMet) from methionine and ATP. The overall synthetic reaction is composed of two sequential steps, AdoMet formation and the subsequent tripolyphosphate hydrolysis which occurs prior to release of AdoMet from the enzyme. The polypeptide is S-adenosylmethionine synthase (Lacticaseibacillus paracasei (strain ATCC 334 / BCRC 17002 / CCUG 31169 / CIP 107868 / KCTC 3260 / NRRL B-441) (Lactobacillus paracasei)).